Consider the following 1030-residue polypeptide: E3 ubiquitin-protein ligase mib1 (1030 aa).

In terms of domain architecture, MIB/HERC2 1 spans 6 to 74; it reads NNRVMMEGVG…AYDVRILDSA (69 aa). Residues 80–132 form a ZZ-type zinc finger; sequence HDGTMCDTCRQQPIIGIRWKCAECTNYDLCTTCYHGDKHHLRHRFYRITTPGS. The Zn(2+) site is built by cysteine 85, cysteine 88, cysteine 100, cysteine 103, cysteine 109, cysteine 112, histidine 118, and histidine 122. One can recognise an MIB/HERC2 2 domain in the interval 143–221; sequence SKKITARGIF…MSDLKCVQDA (79 aa). ANK repeat units lie at residues 430–460, 463–492, 496–525, 529–558, 562–591, 595–627, 631–661, 665–694, and 698–727; these read DINE…DVNG, AGHT…DLEA, DGDR…DLNA, RRQT…HPSL, EGDT…DVTI, NGFN…IVDE, DGYT…NLDV, NQQT…KLDV, and DGDT…VSKV. RING-type zinc fingers lie at residues 817-852 and 864-899; these read CMVC…LICK and CVVC…VQCR. The stretch at 957 to 986 forms a coiled coil; the sequence is ALQRDKDNTNVNADVQKLQQQLQDIKEQTM. The RING-type 3 zinc finger occupies 987–1020; it reads CPVCLDRLKNMIFMCGHGTCQLCGDRMSECPICR.

Interacts with deltaA (dla) and deltaD (dld).

The protein localises to the cytoplasm. Its subcellular location is the cytoskeleton. It is found in the microtubule organizing center. It localises to the centrosome. The protein resides in the centriolar satellite. The protein localises to the cell membrane. The enzyme catalyses S-ubiquitinyl-[E2 ubiquitin-conjugating enzyme]-L-cysteine + [acceptor protein]-L-lysine = [E2 ubiquitin-conjugating enzyme]-L-cysteine + N(6)-ubiquitinyl-[acceptor protein]-L-lysine.. It participates in protein modification; protein ubiquitination. Its function is as follows. E3 ubiquitin-protein ligase that mediates ubiquitination of Delta receptors, which act as ligands of Notch proteins. Positively regulates the Delta-mediated Notch signaling by ubiquitinating the intracellular domain of Delta, leading to endocytosis of Delta receptors. It thereby participates in many processes regulated by the Notch signaling pathway, such as midline cell fate specification prior to germ layer formation, patterning of sensory cell differentiation in the ear, neurogenesis of the hindbrain and commitment to a secretory fate in the intestine. Essential for early embryonic development. This Danio rerio (Zebrafish) protein is E3 ubiquitin-protein ligase mib1 (mib1).